An 83-amino-acid polypeptide reads, in one-letter code: MKSDIHPEYGYVVFKDLASSEMFLTRSVLKPEKQIEWNDGNHYPLFEVEISSASHPFYTGQQRILDSEGRVEKFYARYKKQSQ.

Belongs to the bacterial ribosomal protein bL31 family. Type B subfamily. As to quaternary structure, part of the 50S ribosomal subunit.

This chain is Large ribosomal subunit protein bL31B, found in Tropheryma whipplei (strain TW08/27) (Whipple's bacillus).